Consider the following 187-residue polypeptide: UPF0301 protein BCI_0481 (187 aa).

This sequence belongs to the UPF0301 (AlgH) family.

The chain is UPF0301 protein BCI_0481 from Baumannia cicadellinicola subsp. Homalodisca coagulata.